The chain runs to 282 residues: Biotin synthase (282 aa).

The Radical SAM core domain maps to 1 to 228 (MQEIFLCSIS…NARLMVAGGR (228 aa)). [4Fe-4S] cluster-binding residues include C17, C21, and C24. Positions 61, 96, 154, and 221 each coordinate [2Fe-2S] cluster.

This sequence belongs to the radical SAM superfamily. Biotin synthase family. In terms of assembly, homodimer. [4Fe-4S] cluster is required as a cofactor. The cofactor is [2Fe-2S] cluster.

The enzyme catalyses (4R,5S)-dethiobiotin + (sulfur carrier)-SH + 2 reduced [2Fe-2S]-[ferredoxin] + 2 S-adenosyl-L-methionine = (sulfur carrier)-H + biotin + 2 5'-deoxyadenosine + 2 L-methionine + 2 oxidized [2Fe-2S]-[ferredoxin]. It participates in cofactor biosynthesis; biotin biosynthesis; biotin from 7,8-diaminononanoate: step 2/2. In terms of biological role, catalyzes the conversion of dethiobiotin (DTB) to biotin by the insertion of a sulfur atom into dethiobiotin via a radical-based mechanism. The chain is Biotin synthase from Helicobacter pylori (strain ATCC 700392 / 26695) (Campylobacter pylori).